A 756-amino-acid polypeptide reads, in one-letter code: Pro-neuregulin-2, membrane-bound isoform (756 aa).

The propeptide occupies 1 to 19 (MRRDPAPGFSMLLFGVSLA). Topologically, residues 20–315 (CYSPSLKSVQ…KEAEELYQKR (296 aa)) are extracellular. 3 N-linked (GlcNAc...) asparagine glycosylation sites follow: N55, N186, and N254. The Ig-like C2-type domain maps to 145 to 240 (PKLKKMKSQT…RGRLHVNSVS (96 aa)). Cystine bridges form between C165/C219, C253/C267, C261/C278, and C280/C289. One can recognise an EGF-like domain in the interval 249 to 290 (HARKCNETAKSYCVNGGVCYYIEGINQLSCKCPVGYTGDRCQ). N296 is a glycosylation site (N-linked (GlcNAc...) asparagine). A helical transmembrane segment spans residues 316–336 (VLTITGICVALLVVGIVCVVA). Residues 337–756 (YCKTKKQRRQ…TRAKQDSGPL (420 aa)) lie on the Cytoplasmic side of the membrane. Disordered stretches follow at residues 402-439 (TFSGSHSCSPSHHCSTATPTSSHRHESHTWSLERSESL), 557-578 (LLRHPAPPGPGPGSGPGADMQR), 608-694 (ASPF…DGAL), and 711-756 (LRSD…SGPL). Residues 404–416 (SGSHSCSPSHHCS) are compositionally biased toward low complexity. A compositionally biased stretch (basic and acidic residues) spans 424–437 (HRHESHTWSLERSE). Low complexity predominate over residues 654–682 (LNGLAAQRARAARDSLSLSSGSGCGSASA).

Belongs to the neuregulin family. In terms of assembly, interacts with ERBB3 and ERBB4. Proteolytic cleavage close to the plasma membrane on the external face leads to the release of the soluble growth factor form. Post-translationally, extensive glycosylation precedes the proteolytic cleavage. In terms of tissue distribution, highest expression in the brain, with lower levels in the lung. In the cerebellum, found in granule and Purkinje cells.

It is found in the cell membrane. It localises to the secreted. Functionally, direct ligand for ERBB3 and ERBB4 tyrosine kinase receptors. Concomitantly recruits ERBB1 and ERBB2 coreceptors, resulting in ligand-stimulated tyrosine phosphorylation and activation of the ERBB receptors. May also promote the heterodimerization with the EGF receptor. This chain is Pro-neuregulin-2, membrane-bound isoform (Nrg2), found in Mus musculus (Mouse).